The sequence spans 734 residues: METSSVLTRGAARQRSPAAPEKQARDQTERRPGRRRQGRRINEDQEEEAVFREVVSFTPDPLPARYYDKDTTRPISFYLSTLEELLAWTPLMEDGFNVALEPLVCRRPPLSSPRPRTLLCHDMMGGYLEDRFIQGSEVQNPYSFYHWQYIDIFVYFSHHTVTIPPVCWTNAAHRHGVCVLGTFITEWQEGGRLCEAFLAGDEPSFQAVADRLVQIAQFFRFDGWLINIENSLTPAAVRNTPLFLQYLTAQLHQQVPGGLVLWYDSVVQSGQLKWQDELNDQNRVFFDSCDGFFTNYNWREDHLQRMVAQAGERLADVYVGVDVFARSNVVGGRFDTDKSLELIRKHGFSAALFAPGWVYECLEKSDFFQNQDKFWSLLERFLPTHSICSLPFVTSFCLGLGTRRVCYGKEQAVGPWYHPSAQETQPLFGEHKLAGDSRGWVKTHCCLTDAWHGGSSLLLRGLIPPEVDSVAVRLFSLHIPVPPKVFLSMVYKFEGSTDVQVALELTTGDASSCHVGGMLVLNETGSRHSPRPLRVPPTRLARWASSCGQQLSGGWIQRCYEVNLRGCLLQDLLVSFSRPPGSREEESFICRLGEIQVVDASSLLAPLPRVQNVTISQIRWLPLITGSEGLPTRLLLSCTLHWSYLLLRARCFRIHCWKRTGSSSSVAESPETEKPTFLGLAFANQYRVVDLAVEAAGFGQDGRVEFLVEPVPREGFLVPQAEWGKAVLLFSVPQ.

Methionine 1 carries the post-translational modification N-acetylmethionine. The tract at residues 1-45 (METSSVLTRGAARQRSPAAPEKQARDQTERRPGRRRQGRRINEDQ) is disordered. Over residues 22–31 (KQARDQTERR) the composition is skewed to basic and acidic residues. Residues 281–375 (QNRVFFDSCD…DFFQNQDKFW (95 aa)) form the BRCT domain.

It belongs to the glycosyl hydrolase 85 family.

It localises to the cytoplasm. It is found in the cytosol. It carries out the reaction an N(4)-(oligosaccharide-(1-&gt;3)-[oligosaccharide-(1-&gt;6)]-beta-D-Man-(1-&gt;4)-beta-D-GlcNAc-(1-&gt;4)-alpha-D-GlcNAc)-L-asparaginyl-[protein] + H2O = an oligosaccharide-(1-&gt;3)-[oligosaccharide-(1-&gt;6)]-beta-D-Man-(1-&gt;4)-D-GlcNAc + N(4)-(N-acetyl-beta-D-glucosaminyl)-L-asparaginyl-[protein]. In terms of biological role, endoglycosidase that releases N-glycans from glycoproteins by cleaving the beta-1,4-glycosidic bond in the N,N'-diacetylchitobiose core. Involved in the processing of free oligosaccharides in the cytosol. The chain is Cytosolic endo-beta-N-acetylglucosaminidase (Engase) from Mus musculus (Mouse).